Consider the following 709-residue polypeptide: Disintegrin and metalloproteinase domain-containing protein 5 (709 aa).

The propeptide occupies 1–98; sequence MKTPISSILK…TLSGFIHVIY (98 aa). Over 1 to 649 the chain is Extracellular; the sequence is MKTPISSILK…QQNRGIHPKQ (649 aa). The Peptidase M12B domain maps to 141-334; the sequence is RYIKTDIVVD…QDLECLQDLP (194 aa). 7 disulfides stabilise this stretch: Cys247–Cys329, Cys289–Cys314, Cys291–Cys296, Cys406–Cys426, Cys585–Cys597, Cys591–Cys603, and Cys605–Cys614. Residues 346 to 434 form the Disintegrin domain; it reads RRICGNGILE…YCVPDTFARN (89 aa). In terms of domain architecture, EGF-like; calcium-binding spans 581-615; sequence DFQQCNTSRDCNDHGVCNNFNHCHCDKGYNPPYCE. Residues 650 to 670 traverse the membrane as a helical segment; the sequence is QLQLILYITLPLIMIISAVFI. Residues 671 to 709 are Cytoplasmic-facing; that stretch reads KQSKLSRLCGRERSEGTSCITEDSVSNTKMTTNEGSTLH. The interval 690-709 is disordered; sequence ITEDSVSNTKMTTNEGSTLH.

In terms of assembly, interacts with TEX101. In terms of tissue distribution, detected in testis.

The protein resides in the membrane. Functionally, this is a non catalytic metalloprotease-like protein. May play a role in sperm-egg fusion. The sequence is that of Disintegrin and metalloproteinase domain-containing protein 5 (Adam5) from Rattus norvegicus (Rat).